Reading from the N-terminus, the 281-residue chain is Bifunctional protein FolD (281 aa).

NADP(+) is bound by residues 164–166 (GRS) and serine 189.

Belongs to the tetrahydrofolate dehydrogenase/cyclohydrolase family. As to quaternary structure, homodimer.

It catalyses the reaction (6R)-5,10-methylene-5,6,7,8-tetrahydrofolate + NADP(+) = (6R)-5,10-methenyltetrahydrofolate + NADPH. The catalysed reaction is (6R)-5,10-methenyltetrahydrofolate + H2O = (6R)-10-formyltetrahydrofolate + H(+). It participates in one-carbon metabolism; tetrahydrofolate interconversion. Catalyzes the oxidation of 5,10-methylenetetrahydrofolate to 5,10-methenyltetrahydrofolate and then the hydrolysis of 5,10-methenyltetrahydrofolate to 10-formyltetrahydrofolate. The sequence is that of Bifunctional protein FolD from Enterococcus faecalis (strain ATCC 700802 / V583).